Reading from the N-terminus, the 291-residue chain is Undecaprenyl-diphosphatase (291 aa).

The next 8 membrane-spanning stretches (helical) occupy residues 1 to 21 (MFII…LTEF), 48 to 68 (SAFT…AWVF), 102 to 122 (LHVL…DDFI), 126 to 146 (LFSV…MIIA), 162 to 182 (ISYF…WPGF), 203 to 223 (SDFT…LSLL), 231 to 251 (IADI…GLIA), and 267 to 287 (FAIY…GFGI).

The protein belongs to the UppP family.

It is found in the cell membrane. The enzyme catalyses di-trans,octa-cis-undecaprenyl diphosphate + H2O = di-trans,octa-cis-undecaprenyl phosphate + phosphate + H(+). In terms of biological role, catalyzes the dephosphorylation of undecaprenyl diphosphate (UPP). Confers resistance to bacitracin. This is Undecaprenyl-diphosphatase from Staphylococcus aureus (strain COL).